Consider the following 160-residue polypeptide: Small ribosomal subunit protein uS7 (160 aa).

It belongs to the universal ribosomal protein uS7 family. As to quaternary structure, part of the 30S ribosomal subunit. Contacts proteins S9 and S11.

Its function is as follows. One of the primary rRNA binding proteins, it binds directly to 16S rRNA where it nucleates assembly of the head domain of the 30S subunit. Is located at the subunit interface close to the decoding center, probably blocks exit of the E-site tRNA. The polypeptide is Small ribosomal subunit protein uS7 (Ehrlichia chaffeensis (strain ATCC CRL-10679 / Arkansas)).